A 1128-amino-acid chain; its full sequence is Phytochrome A (1128 aa).

The segment covering 1–21 (MSSSRPTQCSSSSSRTRQSSR) has biased composition (low complexity). The disordered stretch occupies residues 1–24 (MSSSRPTQCSSSSSRTRQSSRARI). Residues 219–404 (SMEVLCNTVV…VFAVHVNKEF (186 aa)) enclose the GAF domain. Phytochromobilin is bound at residue cysteine 324. PAS domains follow at residues 620–690 (VTSE…LQGK) and 750–834 (VEGD…LAGD). The Histidine kinase domain maps to 904 to 1124 (YMRHAINNPL…TFILSVELAS (221 aa)).

The protein belongs to the phytochrome family. In terms of assembly, homodimer. Contains one covalently linked phytochromobilin chromophore.

Its function is as follows. Regulatory photoreceptor which exists in two forms that are reversibly interconvertible by light: the Pr form that absorbs maximally in the red region of the spectrum and the Pfr form that absorbs maximally in the far-red region. Photoconversion of Pr to Pfr induces an array of morphogenic responses, whereas reconversion of Pfr to Pr cancels the induction of those responses. Pfr controls the expression of a number of nuclear genes including those encoding the small subunit of ribulose-bisphosphate carboxylase, chlorophyll A/B binding protein, protochlorophyllide reductase, rRNA, etc. It also controls the expression of its own gene(s) in a negative feedback fashion. In Oryza sativa subsp. indica (Rice), this protein is Phytochrome A (PHYA).